A 218-amino-acid chain; its full sequence is Sodium channel regulatory subunit beta-1 (218 aa).

A signal peptide spans 1 to 18 (MGTLLALVVGAALVSSAW). The Extracellular segment spans residues 19–157 (GGCVEVDSET…DKANRDMASI (139 aa)). Cystine bridges form between C21/C43 and C40/C121. An Ig-like C2-type domain is found at 22 to 150 (VEVDSETEAV…KIHIEVVDKA (129 aa)). Residues N93, N110, N114, and N135 are each glycosylated (N-linked (GlcNAc...) asparagine). The helical transmembrane segment at 158–179 (VSEIMMYVLIVVLTIWLVAEMV) threads the bilayer. Topologically, residues 180 to 218 (YCYKKIAAATEAAAQENASEYLAITSESKENCTGVQVAE) are cytoplasmic.

It belongs to the sodium channel auxiliary subunit SCN1B (TC 8.A.17) family. In terms of assembly, a voltage-gated sodium (Nav) channel consists of an ion-conducting pore-forming alpha subunit functional on its own that is regulated by one or more beta subunits. Interacts with SCN1A; regulatory subunit of SCN1A/Nav1.1. Interacts with SCN3A; regulatory subunit of SCN3A/Nav1.3. Interacts with SCN4A; regulatory subunit of SCN4A/Nav1.4. Interacts with SCN5A; regulatory subunit of SCN5A/Nav1.5. Interacts with SCN8A; regulatory subunit of SCN8A/Nav1.6. Interacts with SCN9A; regulatory subunit of SCN9A/Nav1.7. Interacts with SCN10A; regulatory subunit of SCN10A/Nav1.8. Interacts with NFASC. Interacts with TMEM65.

The protein localises to the cell membrane. Its subcellular location is the perikaryon. The protein resides in the cell projection. It is found in the axon. Functionally, regulatory subunit of multiple voltage-gated sodium (Nav) channels directly mediating the depolarization of excitable membranes. Navs, also called VGSCs (voltage-gated sodium channels) or VDSCs (voltage-dependent sodium channels), operate by switching between closed and open conformations depending on the voltage difference across the membrane. In the open conformation they allow Na(+) ions to selectively pass through the pore, along their electrochemical gradient. The influx of Na+ ions provokes membrane depolarization, initiating the propagation of electrical signals throughout cells and tissues. The accessory beta subunits participate in localization and functional modulation of the Nav channels. Modulates the activity of SCN1A/Nav1.1, SCN2A/Nav1.2, SCN3A/Nav1.3, SCN4A/Nav1.4, SCN5A/Nav1.5, SCN8A/Nav1.6, SCN9A/Nav1.7 and SCN10A/Nav1.8. This is Sodium channel regulatory subunit beta-1 from Canis lupus familiaris (Dog).